We begin with the raw amino-acid sequence, 186 residues long: Quinone reductase (186 aa).

FMN contacts are provided by residues 13–20, 80–83, and Ser-116; these read SLRKESYN and EYNR.

Belongs to the SsuE family. In terms of assembly, homotetramer. Dimer of dimers. The tetrameric configuration has a central role in chromate reductase activity. The cofactor is FMN.

It catalyses the reaction a quinone + NADH + H(+) = a quinol + NAD(+). It carries out the reaction a quinone + NADPH + H(+) = a quinol + NADP(+). The enzyme catalyses Cr(6+) + 2 NADH + O2 = Cr(3+) + superoxide + 2 NAD(+) + 2 H(+). The catalysed reaction is Cr(6+) + 2 NADPH + O2 = Cr(3+) + superoxide + 2 NADP(+) + 2 H(+). Its activity is regulated as follows. May be inhibited by divalent cations. Catalyzes the reduction of quinones. Acts by simultaneous two-electron transfer, avoiding formation of highly reactive semiquinone intermediates and producing quinols that promote tolerance of H(2)O(2). Quinone reduction is probably the primary biological role of ChrR. Can also reduce toxic chromate to insoluble and less toxic Cr(3+). Catalyzes the transfer of three electrons to Cr(6+) producing Cr(3+) and one electron to molecular oxygen. This reaction produces transiently a minimal amount of the toxic Cr(5+) species and reactive oxygen species (ROS). Chromate reduction protects the cell against chromate toxicity, but is likely a secondary activity. Can also reduce potassium ferricyanide and 2,6-dichloroindophenol. During chromate reduction, displays an eightfold preference for NADH over NADPH. The chain is Quinone reductase from Pseudomonas putida (strain ATCC 47054 / DSM 6125 / CFBP 8728 / NCIMB 11950 / KT2440).